Here is a 1194-residue protein sequence, read N- to C-terminus: UPF0507 protein PICST_55861 (1194 aa).

The VPS9 domain occupies 324–475; it reads QSYDPEAVKF…LSSSLSDELS (152 aa).

This sequence belongs to the UPF0507 family.

The polypeptide is UPF0507 protein PICST_55861 (Scheffersomyces stipitis (strain ATCC 58785 / CBS 6054 / NBRC 10063 / NRRL Y-11545) (Yeast)).